A 176-amino-acid chain; its full sequence is Shikimate kinase (176 aa).

ATP is bound at residue 17-24 (GMMGVGKS).

The protein belongs to the shikimate kinase family.

It localises to the cytoplasm. It carries out the reaction shikimate + ATP = 3-phosphoshikimate + ADP + H(+). It functions in the pathway metabolic intermediate biosynthesis; chorismate biosynthesis; chorismate from D-erythrose 4-phosphate and phosphoenolpyruvate: step 5/7. This is Shikimate kinase from Zymomonas mobilis subsp. mobilis (strain ATCC 31821 / ZM4 / CP4).